We begin with the raw amino-acid sequence, 196 residues long: Adenosylcobinamide-phosphate guanylyltransferase (196 aa).

As to quaternary structure, homodimer.

It carries out the reaction adenosylcob(III)inamide phosphate + GTP + H(+) = adenosylcob(III)inamide-GDP + diphosphate. It participates in cofactor biosynthesis; adenosylcobalamin biosynthesis. In terms of biological role, guanylyltransferase that catalyzes the synthesis of adenosylcobinamide-GDP (AdoCbi-GDP) from adenosylcobinamide-phosphate (AdoCbi-P) and GTP. Is involved in adenosylcobalamin biosynthesis. Binds one GTP per dimer. Cannot use other NTPs or GDP. Does not display AdoCbi kinase activity. Is also able to catalyze the condensation of 2-phospho-L-lactate (LP) with GTP in vitro to form PPi and (2S)-lactyl-2-diphospho-5'-guanosine (LPPG), but is much less efficient than CofC, the presumed enzyme catalyzing this reaction in vivo. This Methanocaldococcus jannaschii (strain ATCC 43067 / DSM 2661 / JAL-1 / JCM 10045 / NBRC 100440) (Methanococcus jannaschii) protein is Adenosylcobinamide-phosphate guanylyltransferase (cobY).